We begin with the raw amino-acid sequence, 155 residues long: Small ribosomal subunit protein uS9 (155 aa).

It belongs to the universal ribosomal protein uS9 family.

This chain is Small ribosomal subunit protein uS9, found in Sinorhizobium fredii (strain NBRC 101917 / NGR234).